An 87-amino-acid chain; its full sequence is uncharacterized protein (87 aa).

This is an uncharacterized protein from Escherichia coli (Bacteriophage T4).